A 278-amino-acid chain; its full sequence is Probable endonuclease 4 (278 aa).

Zn(2+) contacts are provided by H67, H107, E141, D173, H176, H210, D223, H225, and E255.

It belongs to the AP endonuclease 2 family. Zn(2+) serves as cofactor.

It carries out the reaction Endonucleolytic cleavage to 5'-phosphooligonucleotide end-products.. In terms of biological role, endonuclease IV plays a role in DNA repair. It cleaves phosphodiester bonds at apurinic or apyrimidinic (AP) sites, generating a 3'-hydroxyl group and a 5'-terminal sugar phosphate. The sequence is that of Probable endonuclease 4 from Natronomonas pharaonis (strain ATCC 35678 / DSM 2160 / CIP 103997 / JCM 8858 / NBRC 14720 / NCIMB 2260 / Gabara) (Halobacterium pharaonis).